Consider the following 715-residue polypeptide: Fatty acid oxidation complex subunit alpha (715 aa).

The segment at M1–P190 is enoyl-CoA hydratase. The interval G306–G714 is 3-hydroxyacyl-CoA dehydrogenase.

The protein in the N-terminal section; belongs to the enoyl-CoA hydratase/isomerase family. In the central section; belongs to the 3-hydroxyacyl-CoA dehydrogenase family. Heterotetramer of two alpha chains (FadJ) and two beta chains (FadI).

The protein localises to the cytoplasm. It catalyses the reaction a (3S)-3-hydroxyacyl-CoA = a (2E)-enoyl-CoA + H2O. It carries out the reaction a 4-saturated-(3S)-3-hydroxyacyl-CoA = a (3E)-enoyl-CoA + H2O. The catalysed reaction is a (3S)-3-hydroxyacyl-CoA + NAD(+) = a 3-oxoacyl-CoA + NADH + H(+). The enzyme catalyses (3S)-3-hydroxybutanoyl-CoA = (3R)-3-hydroxybutanoyl-CoA. It functions in the pathway lipid metabolism; fatty acid beta-oxidation. In terms of biological role, catalyzes the formation of a hydroxyacyl-CoA by addition of water on enoyl-CoA. Also exhibits 3-hydroxyacyl-CoA epimerase and 3-hydroxyacyl-CoA dehydrogenase activities. This Salmonella typhimurium (strain LT2 / SGSC1412 / ATCC 700720) protein is Fatty acid oxidation complex subunit alpha.